A 126-amino-acid chain; its full sequence is Small ribosomal subunit protein uS12 (126 aa).

Residues 1 to 26 (MPTINQLVRKGRASETTKSKSPALQD) are disordered. Residue D89 is modified to 3-methylthioaspartic acid. Positions 103-126 (DTQGVKDRKQARSKYGAKRAKAGK) are disordered. Positions 113–126 (ARSKYGAKRAKAGK) are enriched in basic residues.

This sequence belongs to the universal ribosomal protein uS12 family. In terms of assembly, part of the 30S ribosomal subunit. Contacts proteins S8 and S17. May interact with IF1 in the 30S initiation complex.

Functionally, with S4 and S5 plays an important role in translational accuracy. Its function is as follows. Interacts with and stabilizes bases of the 16S rRNA that are involved in tRNA selection in the A site and with the mRNA backbone. Located at the interface of the 30S and 50S subunits, it traverses the body of the 30S subunit contacting proteins on the other side and probably holding the rRNA structure together. The combined cluster of proteins S8, S12 and S17 appears to hold together the shoulder and platform of the 30S subunit. This Paraburkholderia xenovorans (strain LB400) protein is Small ribosomal subunit protein uS12.